Reading from the N-terminus, the 395-residue chain is Univin (395 aa).

The N-terminal stretch at 1 to 19 (MDVSKVLILTLIWLLTADS) is a signal peptide. The propeptide occupies 20-272 (APPDYVTLTR…CSKRNRRNKR (253 aa)). A glycan (N-linked (GlcNAc...) asparagine) is linked at Asn-50. Residues 69-97 (EGAAASRGGETEIGKEEEEDGRPCSETKL) form a disordered region. 2 N-linked (GlcNAc...) asparagine glycosylation sites follow: Asn-116 and Asn-336. 3 disulfides stabilise this stretch: Cys-294/Cys-360, Cys-323/Cys-392, and Cys-327/Cys-394.

This sequence belongs to the TGF-beta family. Homodimer; disulfide-linked.

The protein resides in the secreted. Functionally, could have a critical role in early developmental decisions in the sea urchin embryo. The polypeptide is Univin (Strongylocentrotus purpuratus (Purple sea urchin)).